Consider the following 270-residue polypeptide: dTDP-6-deoxy-L-talose 4-dehydrogenase (NAD(+)) (270 aa).

Residues 11–12 (YI), 50–51 (DI), 72–76 (LAWQA), asparagine 87, threonine 112, tyrosine 135, and lysine 139 each bind NAD(+). Residues threonine 112 and tyrosine 135 each contribute to the substrate site. Tyrosine 135 (proton acceptor) is an active-site residue.

The protein belongs to the NAD(P)-dependent epimerase/dehydratase family.

It catalyses the reaction dTDP-6-deoxy-beta-L-talose + NAD(+) = dTDP-4-dehydro-beta-L-rhamnose + NADH + H(+). It functions in the pathway bacterial outer membrane biogenesis; LPS O-antigen biosynthesis. Catalyzes the reduction of dTDP-6-deoxy-L-lyxo-4-hexulose to dTDP-6-deoxy-L-talose. The protein is dTDP-6-deoxy-L-talose 4-dehydrogenase (NAD(+)) (tll) of Aggregatibacter actinomycetemcomitans (Actinobacillus actinomycetemcomitans).